Here is a 405-residue protein sequence, read N- to C-terminus: L-carnitine CoA-transferase (405 aa).

CoA is bound by residues Lys97 and Arg104. Asp169 (nucleophile) is an active-site residue.

Belongs to the CoA-transferase III family. CaiB subfamily. In terms of assembly, homodimer.

The protein localises to the cytoplasm. The catalysed reaction is crotonobetainyl-CoA + (R)-carnitine = crotonobetaine + (R)-carnitinyl-CoA. The enzyme catalyses 4-(trimethylamino)butanoyl-CoA + (R)-carnitine = (R)-carnitinyl-CoA + 4-(trimethylamino)butanoate. The protein operates within amine and polyamine metabolism; carnitine metabolism. Functionally, catalyzes the reversible transfer of the CoA moiety from gamma-butyrobetainyl-CoA to L-carnitine to generate L-carnitinyl-CoA and gamma-butyrobetaine. Is also able to catalyze the reversible transfer of the CoA moiety from gamma-butyrobetainyl-CoA or L-carnitinyl-CoA to crotonobetaine to generate crotonobetainyl-CoA. The polypeptide is L-carnitine CoA-transferase (Salmonella gallinarum (strain 287/91 / NCTC 13346)).